We begin with the raw amino-acid sequence, 224 residues long: Ribose-5-phosphate isomerase A (224 aa).

Substrate-binding positions include Thr-26–Thr-29, Asp-82–Asp-85, and Lys-95–Gly-98. The active-site Proton acceptor is Glu-104. Lys-122 lines the substrate pocket.

Belongs to the ribose 5-phosphate isomerase family. Homodimer.

The enzyme catalyses aldehydo-D-ribose 5-phosphate = D-ribulose 5-phosphate. Its pathway is carbohydrate degradation; pentose phosphate pathway; D-ribose 5-phosphate from D-ribulose 5-phosphate (non-oxidative stage): step 1/1. Its function is as follows. Catalyzes the reversible conversion of ribose-5-phosphate to ribulose 5-phosphate. This is Ribose-5-phosphate isomerase A from Lactococcus lactis subsp. cremoris (strain MG1363).